Consider the following 384-residue polypeptide: Galactokinase (384 aa).

34–37 (EHTD) serves as a coordination point for substrate. 123-129 (SSGLSSS) is an ATP binding site. Mg(2+) is bound by residues Ser-129 and Glu-161. The active-site Proton acceptor is Asp-173. Tyr-222 provides a ligand contact to substrate.

It belongs to the GHMP kinase family. GalK subfamily.

Its subcellular location is the cytoplasm. It carries out the reaction alpha-D-galactose + ATP = alpha-D-galactose 1-phosphate + ADP + H(+). It functions in the pathway carbohydrate metabolism; galactose metabolism. In terms of biological role, catalyzes the transfer of the gamma-phosphate of ATP to D-galactose to form alpha-D-galactose-1-phosphate (Gal-1-P). This Haemophilus influenzae (strain ATCC 51907 / DSM 11121 / KW20 / Rd) protein is Galactokinase.